We begin with the raw amino-acid sequence, 123 residues long: Undecaprenol kinase (123 aa).

Over 1 to 33 the chain is Cytoplasmic; it reads MDSKDHRNELNRFFKSFVHAGRGIWETARTERN. The helical transmembrane segment at 34–51 threads the bilayer; it reads FQFHAAAACAVLICGFLV. The Extracellular segment spans residues 52-57; the sequence is ELSIIE. A helical membrane pass occupies residues 58-74; it reads WMIIFLLIGGMFSLELL. The Cytoplasmic segment spans residues 75–99; the sequence is NTAIEHTVDLITDKHHPLAKAAKDA. Residues 100-120 traverse the membrane as a helical segment; the sequence is AAGAVCVFAVISCIIGLLIFL. At 121 to 123 the chain is on the extracellular side; the sequence is PKL.

It belongs to the bacterial diacylglycerol kinase family.

Its subcellular location is the cell membrane. The catalysed reaction is di-trans,octa-cis-undecaprenol + ATP = di-trans,octa-cis-undecaprenyl phosphate + ADP + H(+). Functionally, catalyzes the phosphorylation of undecaprenol in vitro, which is probably the physiological substrate. Exhibits no detectable activity against other substrates such as monoacylglycerol, ceramide, or diacylglycerol (DAG). Appears indispensable for the maintenance of spore stability and viability in B.subtilis. The chain is Undecaprenol kinase (dgkA) from Bacillus subtilis (strain 168).